The primary structure comprises 354 residues: Protein REDOX 1 (354 aa).

Zn(2+) is bound at residue Cys-44. Position 45 to 49 (His-45 to His-49) interacts with NAD(+). The Zn(2+) site is built by His-66, Cys-97, Cys-100, Cys-103, and Cys-111. NAD(+)-binding positions include Gly-185–Gly-190, Lys-214, Val-271–Ala-273, Ser-295–Val-297, and Arg-340.

This sequence belongs to the zinc-containing alcohol dehydrogenase family. Requires Zn(2+) as cofactor. As to expression, expressed in leaf epidermis.

The enzyme catalyses 3,17-didehydrostemmadenine + NADPH + H2O = (16S)-deshydroxymethyl-stemmadenine + formate + NADP(+). It catalyses the reaction 3,17-didehydrostemmadenine + NADPH + H2O = (16R)-deshydroxymethyl-stemmadenine + formate + NADP(+). The catalysed reaction is 17-dehydrostemmadenine + NADP(+) = 3,17-didehydrostemmadenine + NADPH. It functions in the pathway alkaloid biosynthesis. Its function is as follows. Component of iboga and aspidosperma monoterpenoid indole alkaloids (MIAs, e.g. tabersonine and catharanthine) biosynthesis pathway from 19E-geissoschizine. Catalyzes the first oxidation step of the unstable intermediate product resulting from the reaction triggered by the geissoschizine oxidase (GO) in the stemmadenine biosynthesis process from 19E-geissoschizine. This is Protein REDOX 1 from Catharanthus roseus (Madagascar periwinkle).